Reading from the N-terminus, the 207-residue chain is Protein lin-7 homolog B (207 aa).

The Kinase interacting site signature appears at methionine 1 to aspartate 13. The L27 domain occupies leucine 10 to glycine 65. A PDZ domain is found at valine 93 to proline 175. The tract at residues lysine 187–glycine 207 is disordered. Over residues histidine 197 to glycine 207 the composition is skewed to polar residues.

The protein belongs to the lin-7 family. As to quaternary structure, forms a complex with CASK and CASKIN1. Component of the brain-specific heterotrimeric complex (LIN-10-LIN-2-LIN-7 complex) composed of at least APBA1, CASK, and LIN7, which associates with the motor protein KIF17 to transport vesicles along microtubules. Forms a heterotrimeric complex composed of MMP5, LIN7B and PATJ; the N-terminal L27 domain of PALS1 interacts with the L27 domain of PATJ and the C-terminal L27 domain of PALS1 interacts with the L27 domain of LIN7B. Forms a heterotrimeric complex with DLG1 and CASK via their L27 domains. Interacts with DLG4 and GRIN2B as well as CDH1 and CTNNB1, the channels KCNJ12/Kir2.2, KCNJ4/Kir2.3 and probably KCNJ2/Kir2.1 and SLC6A12/BGT-1 via its PDZ domain. The association of LIN7A with cadherin and beta-catenin is calcium-dependent, occurs at synaptic junctions and requires the actin cytoskeleton. Interacts with EGFR, ERBB2, ERBB3 and ERBB4 with both PDZ and KID domains. Associates with KIF17 via APBA1. Interacts with ASIC3. Interacts with TOPK. Interacts with RTKN. Interacts with APBA1. Interacts with MPP7. Interacts with DLG2. Interacts with DLG3.

It localises to the cell membrane. The protein localises to the basolateral cell membrane. The protein resides in the cell junction. Its subcellular location is the postsynaptic density membrane. It is found in the tight junction. Its function is as follows. Plays a role in establishing and maintaining the asymmetric distribution of channels and receptors at the plasma membrane of polarized cells. Forms membrane-associated multiprotein complexes that may regulate delivery and recycling of proteins to the correct membrane domains. The tripartite complex composed of LIN7 (LIN7A, LIN7B or LIN7C), CASK and APBA1 associates with the motor protein KIF17 to transport vesicles containing N-methyl-D-aspartate (NMDA) receptor subunit NR2B along microtubules. This complex may have the potential to couple synaptic vesicle exocytosis to cell adhesion in brain. Ensures the proper localization of GRIN2B (subunit 2B of the NMDA receptor) to neuronal postsynaptic density and may function in localizing synaptic vesicles at synapses where it is recruited by beta-catenin and cadherin. Required to localize Kir2 channels, GABA transporter (SLC6A12) and EGFR/ERBB1, ERBB2, ERBB3 and ERBB4 to the basolateral membrane of epithelial cells. May increase the amplitude of ASIC3 acid-evoked currents by stabilizing the channel at the cell surface. The sequence is that of Protein lin-7 homolog B (LIN7B) from Homo sapiens (Human).